Reading from the N-terminus, the 130-residue chain is Fluoride-specific ion channel FluC (130 aa).

4 helical membrane-spanning segments follow: residues 3 to 23 (LVFL…YFVG), 38 to 58 (LGTF…GHLA), 67 to 87 (FGIF…SYGL), and 102 to 122 (ISYV…GWFL). Na(+)-binding residues include Gly-77 and Thr-80.

The protein belongs to the fluoride channel Fluc/FEX (TC 1.A.43) family.

The protein localises to the cell inner membrane. It catalyses the reaction fluoride(in) = fluoride(out). With respect to regulation, na(+) is not transported, but it plays an essential structural role and its presence is essential for fluoride channel function. Its function is as follows. Fluoride-specific ion channel. Important for reducing fluoride concentration in the cell, thus reducing its toxicity. This Helicobacter pylori (strain J99 / ATCC 700824) (Campylobacter pylori J99) protein is Fluoride-specific ion channel FluC.